The primary structure comprises 262 residues: Sepiapterin reductase (262 aa).

Position 1 is an N-acetylmethionine (methionine 1). Glycine 15 to glycine 21 contributes to the NADP(+) binding site. Serine 33 is modified (phosphoserine). Arginine 43 to serine 44 serves as a coordination point for NADP(+). At serine 46 the chain carries Phosphoserine; by CaMK2; in vitro. Aspartate 70–leucine 71 contacts NADP(+). Residues serine 158–leucine 159 and tyrosine 171 contribute to the substrate site. Lysine 175 serves as a coordination point for NADP(+). Serine 196 carries the post-translational modification Phosphoserine; by CaMK2; in vitro. Glycine 200 provides a ligand contact to substrate. An NADP(+)-binding site is contributed by leucine 202–glutamine 207. Residue serine 214 is modified to Phosphoserine; by CaMK2; in vitro. Aspartate 258 is a substrate binding site.

The protein belongs to the sepiapterin reductase family. As to quaternary structure, homodimer. In terms of processing, in vitro phosphorylation of Ser-46, Ser-196 and Ser-214 by CaMK2 does not change kinetic parameters.

The protein resides in the cytoplasm. The catalysed reaction is L-erythro-7,8-dihydrobiopterin + NADP(+) = L-sepiapterin + NADPH + H(+). It catalyses the reaction (6R)-L-erythro-5,6,7,8-tetrahydrobiopterin + 2 NADP(+) = 6-pyruvoyl-5,6,7,8-tetrahydropterin + 2 NADPH + 2 H(+). In terms of biological role, catalyzes the final one or two reductions in tetra-hydrobiopterin biosynthesis to form 5,6,7,8-tetrahydrobiopterin. The sequence is that of Sepiapterin reductase (Spr) from Rattus norvegicus (Rat).